The following is a 213-amino-acid chain: Putative 3-methyladenine DNA glycosylase (213 aa).

This sequence belongs to the DNA glycosylase MPG family.

This is Putative 3-methyladenine DNA glycosylase from Latilactobacillus sakei subsp. sakei (strain 23K) (Lactobacillus sakei subsp. sakei).